A 953-amino-acid chain; its full sequence is TPR repeat-containing protein ZIP4 (953 aa).

The stretch at 129 to 162 (ASFFHRSGLAWLDLGRVDLASACFEKATPLVSAA) is one TPR 1 repeat. A disordered region spans residues 248-269 (AASPSSSSPRTPPYGGATPKTP). TPR repeat units follow at residues 432-465 (HALL…VSRD) and 473-506 (ADCF…EPNI). Residues 925–953 (VSGDEPDECSQEEAPKASISGSMSQPVLV) form a disordered region. Residues 943-953 (ISGSMSQPVLV) show a composition bias toward polar residues.

Interacts with HEI10 and SHOC1.

It localises to the nucleus. The protein localises to the chromosome. Its function is as follows. Required for crossover formation, complete synapsis of homologous chromosomes and bivalent formation during meiosis. Is specific to recombination events resulting in interference-sensitive crossovers (class I meiotic crossover) and works cooperatively with MER3 to promote crossovers. This Oryza sativa subsp. japonica (Rice) protein is TPR repeat-containing protein ZIP4.